Consider the following 210-residue polypeptide: ATP phosphoribosyltransferase (210 aa).

The protein belongs to the ATP phosphoribosyltransferase family. Short subfamily. Heteromultimer composed of HisG and HisZ subunits.

The protein resides in the cytoplasm. The enzyme catalyses 1-(5-phospho-beta-D-ribosyl)-ATP + diphosphate = 5-phospho-alpha-D-ribose 1-diphosphate + ATP. It participates in amino-acid biosynthesis; L-histidine biosynthesis; L-histidine from 5-phospho-alpha-D-ribose 1-diphosphate: step 1/9. Its function is as follows. Catalyzes the condensation of ATP and 5-phosphoribose 1-diphosphate to form N'-(5'-phosphoribosyl)-ATP (PR-ATP). Has a crucial role in the pathway because the rate of histidine biosynthesis seems to be controlled primarily by regulation of HisG enzymatic activity. The sequence is that of ATP phosphoribosyltransferase from Petrotoga mobilis (strain DSM 10674 / SJ95).